The primary structure comprises 353 residues: Fe(3+) ions import ATP-binding protein FbpC (353 aa).

Positions 9–239 constitute an ABC transporter domain; sequence VTFQNVRKSF…PASSFIADFM (231 aa). 41-48 contributes to the ATP binding site; the sequence is GPSGCGKT.

Belongs to the ABC transporter superfamily. Fe(3+) ion importer (TC 3.A.1.10) family. As to quaternary structure, the complex is composed of two ATP-binding proteins (FbpC), two transmembrane proteins (FbpB) and a solute-binding protein (FbpA).

Its subcellular location is the cell inner membrane. The catalysed reaction is Fe(3+)(out) + ATP + H2O = Fe(3+)(in) + ADP + phosphate + H(+). In terms of biological role, part of the ABC transporter complex FbpABC involved in Fe(3+) ions import. Responsible for energy coupling to the transport system. The sequence is that of Fe(3+) ions import ATP-binding protein FbpC from Rhizobium etli (strain ATCC 51251 / DSM 11541 / JCM 21823 / NBRC 15573 / CFN 42).